Reading from the N-terminus, the 101-residue chain is Translation initiation factor IF-1, chloroplastic (101 aa).

A compositionally biased stretch (polar residues) spans 1–10; it reads MNQLKKSFSP. Residues 1 to 35 form a disordered region; it reads MNQLKKSFSPTEGKKDQNNLINDPQKNKQKKQKKL. The S1-like domain maps to 26 to 101; that stretch reads KNKQKKQKKL…TKGRITYRHR (76 aa).

It belongs to the IF-1 family. As to quaternary structure, component of the 30S ribosomal translation pre-initiation complex which assembles on the 30S ribosome in the order IF-2 and IF-3, IF-1 and N-formylmethionyl-tRNA(fMet); mRNA recruitment can occur at any time during PIC assembly.

It localises to the plastid. It is found in the chloroplast. Functionally, one of the essential components for the initiation of protein synthesis. Stabilizes the binding of IF-2 and IF-3 on the 30S subunit to which N-formylmethionyl-tRNA(fMet) subsequently binds. Helps modulate mRNA selection, yielding the 30S pre-initiation complex (PIC). Upon addition of the 50S ribosomal subunit IF-1, IF-2 and IF-3 are released leaving the mature 70S translation initiation complex. The polypeptide is Translation initiation factor IF-1, chloroplastic (Tetradesmus obliquus (Green alga)).